Reading from the N-terminus, the 66-residue chain is Photosystem II reaction center protein J (66 aa).

Residues 1-25 are disordered; the sequence is MSGKKSPYPDGRIPDRNPDGTPAVP. The chain crosses the membrane as a helical span at residues 37–57; the sequence is LWLVATAGGMAVLFVVGLFFY.

This sequence belongs to the PsbJ family. PSII is composed of 1 copy each of membrane proteins PsbA, PsbB, PsbC, PsbD, PsbE, PsbF, PsbH, PsbI, PsbJ, PsbK, PsbL, PsbM, PsbT, PsbX, PsbY, PsbZ, Psb30/Ycf12, peripheral proteins PsbO, CyanoQ (PsbQ), PsbU, PsbV and a large number of cofactors. It forms dimeric complexes.

The protein localises to the cellular thylakoid membrane. In terms of biological role, one of the components of the core complex of photosystem II (PSII). PSII is a light-driven water:plastoquinone oxidoreductase that uses light energy to abstract electrons from H(2)O, generating O(2) and a proton gradient subsequently used for ATP formation. It consists of a core antenna complex that captures photons, and an electron transfer chain that converts photonic excitation into a charge separation. This chain is Photosystem II reaction center protein J, found in Synechococcus sp. (strain CC9605).